The following is an 879-amino-acid chain: Alanine--tRNA ligase (879 aa).

Positions 566, 570, 668, and 672 each coordinate Zn(2+).

The protein belongs to the class-II aminoacyl-tRNA synthetase family. Zn(2+) is required as a cofactor.

The protein localises to the cytoplasm. The catalysed reaction is tRNA(Ala) + L-alanine + ATP = L-alanyl-tRNA(Ala) + AMP + diphosphate. Its function is as follows. Catalyzes the attachment of alanine to tRNA(Ala) in a two-step reaction: alanine is first activated by ATP to form Ala-AMP and then transferred to the acceptor end of tRNA(Ala). Also edits incorrectly charged Ser-tRNA(Ala) and Gly-tRNA(Ala) via its editing domain. This Listeria innocua serovar 6a (strain ATCC BAA-680 / CLIP 11262) protein is Alanine--tRNA ligase.